The sequence spans 102 residues: Heat shock protein HspQ (102 aa).

It belongs to the HspQ family.

The protein resides in the cytoplasm. Involved in the degradation of certain denaturated proteins, including DnaA, during heat shock stress. This Pectobacterium atrosepticum (strain SCRI 1043 / ATCC BAA-672) (Erwinia carotovora subsp. atroseptica) protein is Heat shock protein HspQ.